Reading from the N-terminus, the 63-residue chain is Large ribosomal subunit protein uL29 (63 aa).

This sequence belongs to the universal ribosomal protein uL29 family.

In Aeromonas salmonicida (strain A449), this protein is Large ribosomal subunit protein uL29.